Consider the following 314-residue polypeptide: Serine/threonine-protein phosphatase PP2A-5 catalytic subunit (314 aa).

Mn(2+) contacts are provided by Asp62, His64, Asp90, and Asn122. His123 (proton donor) is an active-site residue. His172 and His246 together coordinate Mn(2+).

This sequence belongs to the PPP phosphatase family. PP-2A subfamily. Requires Mn(2+) as cofactor.

The protein resides in the cytoplasm. It catalyses the reaction O-phospho-L-seryl-[protein] + H2O = L-seryl-[protein] + phosphate. It carries out the reaction O-phospho-L-threonyl-[protein] + H2O = L-threonyl-[protein] + phosphate. In Nicotiana tabacum (Common tobacco), this protein is Serine/threonine-protein phosphatase PP2A-5 catalytic subunit (NPP5).